The following is a 1000-amino-acid chain: UPF0182 protein SCO5204 (1000 aa).

The next 7 membrane-spanning stretches (helical) occupy residues 26–48 (LLLT…GFWT), 70–92 (IGLF…WLAH), 121–143 (WLLL…GQWR), 177–199 (FLLG…THYL), 220–237 (LSVL…AYWL), 267–289 (LPAK…ATLW), and 296–318 (PVIG…PALV). Disordered regions lie at residues 884-908 (AETE…NPTV) and 943-1000 (EALQ…ADTG). Positions 888–897 (QPPDEGDDTT) are enriched in acidic residues. Composition is skewed to basic and acidic residues over residues 943–953 (EALQRAEDAQA) and 963–984 (NGDD…DKAG).

The protein belongs to the UPF0182 family.

It localises to the cell membrane. This chain is UPF0182 protein SCO5204, found in Streptomyces coelicolor (strain ATCC BAA-471 / A3(2) / M145).